Here is a 126-residue protein sequence, read N- to C-terminus: Glycine cleavage system H protein (126 aa).

Positions 22–104 (IAYVGITDYA…YGEGWLIKMK (83 aa)) constitute a Lipoyl-binding domain. The residue at position 63 (K63) is an N6-lipoyllysine.

It belongs to the GcvH family. In terms of assembly, the glycine cleavage system is composed of four proteins: P, T, L and H. The cofactor is (R)-lipoate.

The glycine cleavage system catalyzes the degradation of glycine. The H protein shuttles the methylamine group of glycine from the P protein to the T protein. This is Glycine cleavage system H protein from Bacteroides thetaiotaomicron (strain ATCC 29148 / DSM 2079 / JCM 5827 / CCUG 10774 / NCTC 10582 / VPI-5482 / E50).